We begin with the raw amino-acid sequence, 273 residues long: 1,4-dihydroxy-2-naphthoyl-CoA synthase (273 aa).

Substrate-binding positions include Arg34, Ser73–Gln77, Tyr85, Tyr117–Gly121, Thr143, Ser149, Tyr246, and Lys261. Gln142–Gly144 is a hydrogencarbonate binding site. The segment covering Gly254–Asp265 has biased composition (basic and acidic residues). Positions Gly254–Pro273 are disordered.

It belongs to the enoyl-CoA hydratase/isomerase family. MenB subfamily. Hydrogencarbonate serves as cofactor.

It carries out the reaction 2-succinylbenzoyl-CoA + H(+) = 1,4-dihydroxy-2-naphthoyl-CoA + H2O. It functions in the pathway quinol/quinone metabolism; 1,4-dihydroxy-2-naphthoate biosynthesis; 1,4-dihydroxy-2-naphthoate from chorismate: step 6/7. The protein operates within quinol/quinone metabolism; menaquinone biosynthesis. Its function is as follows. Converts o-succinylbenzoyl-CoA (OSB-CoA) to 1,4-dihydroxy-2-naphthoyl-CoA (DHNA-CoA). This chain is 1,4-dihydroxy-2-naphthoyl-CoA synthase, found in Staphylococcus aureus (strain Mu50 / ATCC 700699).